Consider the following 2590-residue polypeptide: MTPTLLLCGSQAIQWSEDYLSSLREMLLADSALQPLVHAIRDLPQLWATLLEADTALHKMPGKQTLDRFTRWLDGERLLEKDSPSDLNMIMSPLTVIMQLVEYISHLHQSNLTHLQILDGAKHGGIQGFCTGFLAAITLSISRDESDVAELGTVALRLATCIGAYVDLDQCNSSGFACLAVRWPTAADERKVKDILETYNGAYLSVRSDVASATLTVPRAAKSSIIDELSNIGAHVKDIPLSGRFHNQVNRELFAKLAALCKSTIGLQFPGHCRPLVPLRSNADGELLSGNEALHVAALNSLLLHVSDWHKTVSKAMDSLSQTTAEPEVSVLGLGDCIPRTIRQSRALHVSHIKTGSTQSHDDPYQYPGDSIAIVGMGCRFPGADSLEEYWKVIESATSMLGDLPEGRFPKTNLRRDPNGKIPLNGNFLRHPDLWDHRFFKRSSREAASMDPQHRLALEVAYEALESAGYFAQRSPAKDIGCYMGVAASDYEDNVASHAPTAFSVLGMVRAFTSGKISHFFGLSGPSLVFDTACSSSLVAIHTACRALQANECSMALAGGVNVITSPTLHQNLGAANFLSPTGGSKSFDDRADGYCRGEGAGIVLLKRLDRAIAEKDRILGVIAGSAVNQNDNAYPVTVPVSMSQTALYRRVLDMSGLSPRPVSYVEAHGTGTPKGDPIECASIREVFGGQVNRKLYFGSVKANIGHAEAASGVAGLIKVLLMMQKRSIPPQALFASLNKSIPPLEPDNMAIAQRVTPWSEEFYAACVNNYGAAGSNAALIVTQPPNIRRGSHAGVALKNCPILLSANTAGSLRQTTVVLREFLAHNRAISENDLLKSTAFHLAKRFNPSFKYRHSFSVASLNQLDEKLQICSQLPDSEFLLPPNHRPVVLAFGGQTGNVVHLSEGVYRGSSILRKYLDKCDMQLRQLGLTSIFPTIFEQKSIEDTIQLHCTMFSLQYASAMAWIAAGLQVQTVIGHSFGQLTAMCVAGVLSLVDAIRLIAGRATIIQEKWGAERGCMLLVQGELALVQKLISQAREATSHVVEIACFNGPNSFVLVGSEADIDAFDGLAASSLKTRKMAVTHGFHSRFVDTIMDDYQKLADSLEYKSPTIAIETCSSGETWDMFTADKVAKQSRQPVYFAEAVERIAQRLGSCTWIEAGSGSGITSMARRALNDTTNHDFHAVNLGGPEPWAAFADTTVSLWQAGVQVDYWPFHKEQQLEYLPLNLPPYQFERSRHWLAYVDRPGADGLIQSKETQSVETKPKLVSFVKYLDSNRQTAEFSIGQDCEQYQALVRGHAVLANTLCPAALYVEMAAYAASLLVPDFSPSTYTSRVEDLHMQSPLAIDLKRGLRLVLSSSGSGTWQFIMQSFSLSDSDNATQHASGTVNISSLTSEKLQSRFSRYKRIVNYERCESLLSDSGTSAIQGSLVYKMFDKVVVYSDIFRGVSKIASRGHEVTGQVSLPSAGLELVKDSVCNPLVVDNFTQVAGLHVNSLDDCGSNEVYLCNGIEQIDACKPLDASGSWLVHSSFDRVGTRELVNDIFVFDASTKELVMTLFGLRFAKVPTASLKRALERANTVQNPVQTPSLKVTEPSANVPKAQPVSTYPKPMKPAPAADAQIRTATMALLNEVADVPLSDIADGAQLEDLGIDSLMAAELLSAIRERFNLDIPTSTFASIVDFKGLYQHIASGTDAGILTPSSSGMESDDSILEVQYTDTSTPFSEIAYPLEDKDAGDSAQAGQIAQLSQLFAEHLECPLPIPSGETLRDIGLDSLVGMELAADIQQAFGRKVDLATLDPECTFGQFCDMVIPKPTLSVPTVSEKVDKTVRWASTEIAYTAKRENKMQDPVEMQSDGGNVNYLAHCAEDFAQIRKNYTTFAKQTGFADFRANVYPQQKELVCAYVTEAFAALGSDLKTIPSGSPLPPIQHIARHAKVMKQYYKVLEDSGLITITDNGPIRTAKPVSPVKSEDLYQMIYSAFPQHRGEHKLLNSTGSKLASCLKGETDPLQILFGSKASKDLMEDVYTNSPMFATGTRILGDFFVKTFSKYKGPEKLRILELGAGTGGTTKYIVEKLLEHNIPFTYTFTDLSPSLVALAKRKFSHYGCLEFLVLDIEKTPPEHLTNSYHAILSSNCVHATKNLLNSTTNTRKLLRADGFLCLLELTRNLFWLDCVFGLLEGWWLFEDGRKHVLADEYLWKETLLEAGFRHVDWSDDDTEESDQFRVITGFVADIGHNALDQAKPVTTKLPTMETTSFATVDGIPLLADIYYPTKPDAPGVKRPIALMIHGGGHIMLSRRDIRPKQTRLLLERGLLPVSIEYRLCPEVSLTEGPIPDACAALNWVRTVLPTLRLQRPDIHPNGDKVAVVGWSTGGTLSMMLAFSAPQRGIRPPDAILAFYCPTDYEAEFFRTPNYPEDTSEVVPEIYDILEGVQERPITAYNVPAHQGATGGWMSLSDPRSRIALHMNWRGQMMPVLLDGLPSKKTLLEAGGDASPSKWMDLPQPSVDRLRAVSPYAQIVQGNYRVPTFLVHGTRDDLIPWEQSVRTKDALTSQGVAAGVAVVDDAVHLFDLYRDPEGRYWNAVLEGYEFLLRHL.

The N-terminal acylcarrier protein transacylase domain (SAT) stretch occupies residues 6–255 (LLCGSQAIQW…HNQVNRELFA (250 aa)). Residues 369–784 (GDSIAIVGMG…GSNAALIVTQ (416 aa)) form the Ketosynthase family 3 (KS3) domain. Active-site for beta-ketoacyl synthase activity residues include Cys534, His669, and His707. The tract at residues 891-1191 (LAFGGQTGNV…HAVNLGGPEP (301 aa)) is malonyl-CoA:ACP transacylase (MAT) domain. The For acyl/malonyl transferase activity role is filled by Ser978. The N-terminal hotdog fold stretch occupies residues 1263–1393 (PKLVSFVKYL…GTVNISSLTS (131 aa)). One can recognise a PKS/mFAS DH domain in the interval 1263 to 1569 (PKLVSFVKYL…FAKVPTASLK (307 aa)). The interval 1267–1568 (SFVKYLDSNR…RFAKVPTASL (302 aa)) is product template (PT) domain. The active-site Proton acceptor; for dehydratase activity is the His1297. Positions 1421-1569 (TSAIQGSLVY…FAKVPTASLK (149 aa)) are C-terminal hotdog fold. The active-site Proton donor; for dehydratase activity is Asp1481. The segment at 1587-1612 (LKVTEPSANVPKAQPVSTYPKPMKPA) is disordered. 2 consecutive Carrier domains span residues 1617–1691 (AQIR…ASGT) and 1736–1812 (SAQA…IPKP). Residues Ser1651 and Ser1772 each carry the O-(pantetheine 4'-phosphoryl)serine modification. Positions 1980–2212 (QHRGEHKLLN…GFRHVDWSDD (233 aa)) are methyltransferase (CMeT) domain. Residues 2282–2590 (LMIHGGGHIM…EGYEFLLRHL (309 aa)) form a thioesterase (TE) domain region.

It carries out the reaction 3 malonyl-CoA + acetyl-CoA + S-adenosyl-L-methionine + H(+) = 5-methylorsellinate + S-adenosyl-L-homocysteine + 3 CO2 + 4 CoA. The protein operates within secondary metabolite biosynthesis. In terms of biological role, non-reducing polyketide synthase; part of the cluster A that mediates the biosynthesis of azasperpyranones, members of the azaphilone family that exhibit anti-cancer activities. Azasperpyranones are synthesized by 2 clusters, A and B. Cluster A is responsible for the production of the polyhydric phenol moiety while the azaphilonoid scaffold is produced by the cluster B. The non-reducing polyketide synthase ATEG_03629 produces 5-methyl orsellinic acid, which is then reduced to 5-methyl orsellinic aldehyde by the NRPS-like protein ATEG_03630. 5-methyl orsellinic aldehyde is then first hydroxylated by the FAD-dependent monooxygenase ATEG_03635 and subsequently hydroxylated by the cytochrome P450 monooxygenase ATEG_03631 to produce the unstable polyhydric phenol precursor of azasperpyranones. On the other hand, the polyketide synthase ATEG_07659 is responsible for producing the 3,5-dimethyloctadienone moiety from acetyl-CoA, three malonyl-CoA, and two S-adenosyl methionines (SAM). The 3,5-dimethyloctadienone moiety is then loaded onto the SAT domain of ATEG_07661 and extended with four malonyl-CoA and one SAM, which leads to the formation of 2,4-dihydroxy-6-(5,7-dimethyl-2-oxo-trans-3-trans-5-nonadienyl)-3-methylbenzaldehyde (compound 8) after reductive release and aldol condensation. The FAD-dependent monooxygenase ATEG_07662 is the next enzyme in the biosynthesis sequence and hydroxylates the side chain at the benzylic position of compound 8. In Aspergillus nidulans, afoF, the ortholog of the FAD-dependent oxygenase ATEG_07660, is the key enzyme for the biosynthesis of asperfuranone by catalyzing the hydroxylation at C-8 of to prevent the formation of a six-membered ring hemiacetal intermediate and thus facilitating the formation of a five-membered ring to produce asperfuranone. In Aspergillus terreus, ATEG_07660 is probably not functional, which leads to the formation of the six-membered ring hemiacetal intermediate presperpyranone instead of asperfuranone. Finally, ATEG_03636 is involved in the condensation of the polyhydric phenol moiety produced by cluster A and the perasperpyranone precursor produced by cluster B, to yield azasperpyranone A. Further modifications of azasperpyranone A result in the production of derivatives, including azasperpyranone B to F. The polypeptide is 5-methylorsellinic acid synthase (Aspergillus terreus (strain NIH 2624 / FGSC A1156)).